The sequence spans 776 residues: Endonuclease MutS2 (776 aa).

Residue 330-337 (GPNTGGKT) participates in ATP binding. Residues 701–776 (LDLRGMRYEE…GSGATIAILK (76 aa)) enclose the Smr domain.

Belongs to the DNA mismatch repair MutS family. MutS2 subfamily. In terms of assembly, homodimer. Binds to stalled ribosomes, contacting rRNA.

Its function is as follows. Endonuclease that is involved in the suppression of homologous recombination and thus may have a key role in the control of bacterial genetic diversity. In terms of biological role, acts as a ribosome collision sensor, splitting the ribosome into its 2 subunits. Detects stalled/collided 70S ribosomes which it binds and splits by an ATP-hydrolysis driven conformational change. Acts upstream of the ribosome quality control system (RQC), a ribosome-associated complex that mediates the extraction of incompletely synthesized nascent chains from stalled ribosomes and their subsequent degradation. Probably generates substrates for RQC. This Lactococcus lactis subsp. lactis (strain IL1403) (Streptococcus lactis) protein is Endonuclease MutS2.